Consider the following 408-residue polypeptide: Imidazolonepropionase (408 aa).

His73 and His75 together coordinate Fe(3+). Residues His73 and His75 each coordinate Zn(2+). 4-imidazolone-5-propanoate contacts are provided by Arg82, Tyr145, and His178. N-formimidoyl-L-glutamate is bound at residue Tyr145. His243 is a Fe(3+) binding site. His243 lines the Zn(2+) pocket. Gln246 serves as a coordination point for 4-imidazolone-5-propanoate. Asp318 is a Fe(3+) binding site. Position 318 (Asp318) interacts with Zn(2+). Positions 320 and 322 each coordinate N-formimidoyl-L-glutamate. Residue Ser323 participates in 4-imidazolone-5-propanoate binding.

Belongs to the metallo-dependent hydrolases superfamily. HutI family. The cofactor is Zn(2+). Fe(3+) is required as a cofactor.

The protein localises to the cytoplasm. The catalysed reaction is 4-imidazolone-5-propanoate + H2O = N-formimidoyl-L-glutamate. It participates in amino-acid degradation; L-histidine degradation into L-glutamate; N-formimidoyl-L-glutamate from L-histidine: step 3/3. Its function is as follows. Catalyzes the hydrolytic cleavage of the carbon-nitrogen bond in imidazolone-5-propanoate to yield N-formimidoyl-L-glutamate. It is the third step in the universal histidine degradation pathway. In Shewanella oneidensis (strain ATCC 700550 / JCM 31522 / CIP 106686 / LMG 19005 / NCIMB 14063 / MR-1), this protein is Imidazolonepropionase.